A 209-amino-acid chain; its full sequence is Imidazole glycerol phosphate synthase subunit HisH (209 aa).

The Glutamine amidotransferase type-1 domain maps to 1 to 205; sequence MIAIIDYGMG…KGVVETWKSS (205 aa). Residue cysteine 79 is the Nucleophile of the active site. Active-site residues include histidine 180 and glutamate 182.

Heterodimer of HisH and HisF.

The protein resides in the cytoplasm. The enzyme catalyses 5-[(5-phospho-1-deoxy-D-ribulos-1-ylimino)methylamino]-1-(5-phospho-beta-D-ribosyl)imidazole-4-carboxamide + L-glutamine = D-erythro-1-(imidazol-4-yl)glycerol 3-phosphate + 5-amino-1-(5-phospho-beta-D-ribosyl)imidazole-4-carboxamide + L-glutamate + H(+). The catalysed reaction is L-glutamine + H2O = L-glutamate + NH4(+). Its pathway is amino-acid biosynthesis; L-histidine biosynthesis; L-histidine from 5-phospho-alpha-D-ribose 1-diphosphate: step 5/9. Functionally, IGPS catalyzes the conversion of PRFAR and glutamine to IGP, AICAR and glutamate. The HisH subunit catalyzes the hydrolysis of glutamine to glutamate and ammonia as part of the synthesis of IGP and AICAR. The resulting ammonia molecule is channeled to the active site of HisF. This Bacillus anthracis (strain A0248) protein is Imidazole glycerol phosphate synthase subunit HisH.